The sequence spans 358 residues: Probable branched-chain-amino-acid aminotransferase (358 aa).

The residue at position 196 (K196) is an N6-(pyridoxal phosphate)lysine.

It belongs to the class-IV pyridoxal-phosphate-dependent aminotransferase family. Requires pyridoxal 5'-phosphate as cofactor.

It carries out the reaction L-leucine + 2-oxoglutarate = 4-methyl-2-oxopentanoate + L-glutamate. It catalyses the reaction L-isoleucine + 2-oxoglutarate = (S)-3-methyl-2-oxopentanoate + L-glutamate. The enzyme catalyses L-valine + 2-oxoglutarate = 3-methyl-2-oxobutanoate + L-glutamate. It participates in amino-acid biosynthesis; L-isoleucine biosynthesis; L-isoleucine from 2-oxobutanoate: step 4/4. It functions in the pathway amino-acid biosynthesis; L-leucine biosynthesis; L-leucine from 3-methyl-2-oxobutanoate: step 4/4. Its pathway is amino-acid biosynthesis; L-valine biosynthesis; L-valine from pyruvate: step 4/4. In terms of biological role, acts on leucine, isoleucine and valine. The polypeptide is Probable branched-chain-amino-acid aminotransferase (ilvE) (Staphylococcus aureus (strain N315)).